An 80-amino-acid polypeptide reads, in one-letter code: Large ribosomal subunit protein uL29 (80 aa).

This sequence belongs to the universal ribosomal protein uL29 family.

This Mycobacterium marinum (strain ATCC BAA-535 / M) protein is Large ribosomal subunit protein uL29.